The sequence spans 296 residues: GTPase Era (296 aa).

The Era-type G domain maps to 7-174 (KCSMSAIVGT…VDYLCETSPY (168 aa)). Positions 15–22 (GTTNAGKS) are G1. 15–22 (GTTNAGKS) lines the GTP pocket. A G2 region spans residues 41–45 (QTTRV). The interval 62-65 (DTPG) is G3. Residues 62–66 (DTPGI) and 124–127 (NKID) contribute to the GTP site. The segment at 124–127 (NKID) is G4. Residues 153–155 (ISA) are G5. A KH type-2 domain is found at 205-282 (LRHELPYSLS…HLFLFVKVRE (78 aa)).

Belongs to the TRAFAC class TrmE-Era-EngA-EngB-Septin-like GTPase superfamily. Era GTPase family. Monomer.

Its subcellular location is the cytoplasm. It localises to the cell inner membrane. In terms of biological role, an essential GTPase that binds both GDP and GTP, with rapid nucleotide exchange. Plays a role in 16S rRNA processing and 30S ribosomal subunit biogenesis and possibly also in cell cycle regulation and energy metabolism. The chain is GTPase Era from Ehrlichia ruminantium (strain Gardel).